The primary structure comprises 610 residues: DNA replication regulator sld2 (610 aa).

Over residues 28–42 the composition is skewed to basic and acidic residues; sequence WAQKNDGKKPSREAI. 3 disordered regions span residues 28–115, 127–261, and 338–610; these read WAQK…AVHE, SPAV…ERSV, and EQGG…RRRR. 2 stretches are compositionally biased toward polar residues: residues 86 to 110 and 232 to 261; these read ETSL…SQHY and TKTS…ERSV. 2 stretches are compositionally biased toward acidic residues: residues 373–386 and 414–428; these read VPEE…DEAA and FDDE…EEDL. The segment covering 442–464 has biased composition (basic residues); that stretch reads VFKKKGQKRTTRKVNMRPTRTKR. Positions 470–480 are enriched in acidic residues; it reads AEEEDDGEEEH. A compositionally biased stretch (basic and acidic residues) spans 493–503; the sequence is KNLDGDDHHTL. Acidic residues predominate over residues 514 to 527; that stretch reads EFDDGSEGEDEEAE. The span at 544-573 shows a compositional bias: basic and acidic residues; the sequence is SAKEKTKKDATTETKKKKGTKEGGDEEPAK.

Belongs to the SLD2 family.

The protein resides in the cytoplasm. It localises to the nucleus. Has a role in the initiation of DNA replication. Required at S-phase checkpoint. The polypeptide is DNA replication regulator sld2 (drc-4) (Neurospora crassa (strain ATCC 24698 / 74-OR23-1A / CBS 708.71 / DSM 1257 / FGSC 987)).